A 416-amino-acid polypeptide reads, in one-letter code: Enterobactin exporter EntS (416 aa).

Over 1–21 (MNKQSWLLNLSLLKTHPAFRA) the chain is Cytoplasmic. The chain crosses the membrane as a helical span at residues 22 to 42 (VFLARFISIVSLGLLGVAVPV). Over 43-55 (QIQMMTHSTWLVG) the chain is Periplasmic. A helical membrane pass occupies residues 56–76 (LSVTLTGGAMFVGLMVGGVLA). Residues 77-83 (DRYERKK) are Cytoplasmic-facing. A helical membrane pass occupies residues 84–104 (VILLARGTCGIGFIGLCLNAL). Over 105–109 (LPEPS) the chain is Periplasmic. A helical transmembrane segment spans residues 110-130 (LLAIYLLGLWDGFFASLGVTA). Residues 131–156 (LLAATPALVGRENLMQAGAITMLTVR) are Cytoplasmic-facing. Residues 157–177 (LGSVISPMIGGLLLATGGVAW) form a helical membrane-spanning segment. Residue Asn178 is a topological domain, periplasmic. Residues 179–199 (YGLAAAGTFITLLPLLSLPAL) form a helical membrane-spanning segment. Topologically, residues 200 to 218 (PPPPQPREHPLKSLLAGFR) are cytoplasmic. A helical membrane pass occupies residues 219–239 (FLLASPLVGGIALLGGLLTMA). Topologically, residues 240-256 (SAVRVLYPALADNWQMS) are periplasmic. Residues 257-277 (AAEIGFLYAAIPLGAAIGALT) form a helical membrane-spanning segment. The Cytoplasmic segment spans residues 278–287 (SGKLAHSARP). The helical transmembrane segment at 288 to 307 (GLLMLLSTLGSFLAIGLFGL) threads the bilayer. At 308–313 (MPMWIL) the chain is on the periplasmic side. A helical transmembrane segment spans residues 314 to 336 (GVVCLALFGWLSAVSSLLQYTML). The Cytoplasmic portion of the chain corresponds to 337–356 (QTQTPEAMLGRINGLWTAQN). A helical transmembrane segment spans residues 357 to 377 (VTGDAIGAALLGGLGAMMTPV). Residue Ala378 is a topological domain, periplasmic. Residues 379–399 (SASASGFGLLIIGVLLLLVLV) form a helical membrane-spanning segment. The Cytoplasmic segment spans residues 400-416 (ELRRFRQTPPQVTASDS).

It belongs to the major facilitator superfamily. EntS (TC 2.A.1.38) family.

The protein localises to the cell inner membrane. Functionally, component of an export pathway for enterobactin. The protein is Enterobactin exporter EntS of Shigella boydii serotype 4 (strain Sb227).